The primary structure comprises 183 residues: Large ribosomal subunit protein bL17 (183 aa).

A compositionally biased stretch (basic and acidic residues) spans 130 to 150; sequence GTKFAKDEKAKAEATEAKAEE. Residues 130 to 183 form a disordered region; sequence GTKFAKDEKAKAEATEAKAEETTETTESTEAESTEAPAEEAKAEDTAAEKKDES. Residues 151-162 show a composition bias toward acidic residues; sequence TTETTESTEAES. Residues 168 to 183 are compositionally biased toward basic and acidic residues; the sequence is EEAKAEDTAAEKKDES.

Belongs to the bacterial ribosomal protein bL17 family. In terms of assembly, part of the 50S ribosomal subunit. Contacts protein L32.

In Saccharopolyspora erythraea (strain ATCC 11635 / DSM 40517 / JCM 4748 / NBRC 13426 / NCIMB 8594 / NRRL 2338), this protein is Large ribosomal subunit protein bL17.